Here is a 140-residue protein sequence, read N- to C-terminus: ISDra2 transposase TnpA (140 aa).

2 residues coordinate Mg(2+): H67 and H69. The mobile alpha helix stretch occupies residues 127–133 (AQIQKYI). The Nucleophile role is filled by Y132. Residue Q136 coordinates Mg(2+).

This sequence belongs to the transposase 17 family. As to quaternary structure, homodimer. It depends on Mg(2+) as a cofactor.

Both the excision and insertion steps are inhibited by TnpB. In terms of biological role, a transposase that is part of insertion sequence (IS) element ISDra2, it is necessary and sufficient for both transposon excision and insertion of ISDra2. This protein alone can be provided in trans and allows transposition of an empty IS element (tnpA or tnpA-tnpB replaced by a selectable marker). ISDra2 binds subterminal imperfect palindromes at the left (LE) and right (RE) ends of the element and cleaves only the 'top strand' which is circularized and subsequently reinserted into the DNA target. This is called a 'peel and paste' mechanism and increases the copy number of the IS. Transposition is linked to DNA replication in the absence of irradiation, with maximal activity when the 'top strand' is on the replication lagging strand, and occurs preferentially on the lagging strand. The IS element inserts 3' of the target sequence 5'-TTGAT-3'; target duplication has not been observed. This Deinococcus radiodurans (strain ATCC 13939 / DSM 20539 / JCM 16871 / CCUG 27074 / LMG 4051 / NBRC 15346 / NCIMB 9279 / VKM B-1422 / R1) protein is ISDra2 transposase TnpA.